The following is a 472-amino-acid chain: FAD-dependent monooxygenase ltmM (472 aa).

The chain crosses the membrane as a helical span at residues 7–27 (VIIVGGSVAGLSLAHCLEKIG). FAD contacts are provided by Glu-34, Gly-48, and Arg-107. An N-linked (GlcNAc...) asparagine glycan is attached at Asn-186. Asp-306 and Ala-319 together coordinate FAD. The chain crosses the membrane as a helical span at residues 450–470 (IVYALYLVAAAAFILYCLSSL).

Belongs to the paxM FAD-dependent monooxygenase family. It depends on FAD as a cofactor.

It localises to the membrane. The protein operates within secondary metabolite biosynthesis. FAD-dependent monooxygenase; part of the gene cluster that mediates the biosynthesis of lolitrems, indole-diterpene mycotoxins that are potent tremorgens in mammals, and are synthesized by clavicipitaceous fungal endophytes in association with their grass hosts. The geranylgeranyl diphosphate (GGPP) synthase ltmG is proposed to catalyze the first step in lolitremB biosynthesis. LtmG catalyzes a series of iterative condensations of isopentenyl diphosphate (IPP) with dimethylallyl diphosphate (DMAPP), geranyl diphosphate (GPP), and farnesyl diphosphate (FPP), to form GGPP. GGPP then condenses with indole-3-glycerol phosphate to form 3-geranylgeranylindole, an acyclic intermediate, to be incorporated into paxilline. Either ltmG or ltmC could be responsible for this step, as both are putative prenyl transferases. The FAD-dependent monooxygenase ltmM then catalyzes the epoxidation of the two terminal alkenes of the geranylgeranyl moiety, which is subsequently cyclized by ltmB, to paspaline. The cytochrome P450 monooxygenases ltmQ and ltmP can sequentially oxidize paspaline to terpendole E and terpendole F. Alternatively, ltmP converts paspaline to an intermediate which is oxidized by ltmQ to terpendole F. LtmF, ltmK, ltmE and ltmJ appear to be unique to the epichloe endophytes. The prenyltransferase ltmF is involved in the 27-hydroxyl-O-prenylation. The cytochrome P450 monooxygenase ltmK is required for the oxidative acetal ring formation. The multi-functional prenyltransferase ltmE is required for C20- and C21-prenylations of the indole ring of paspalanes and acts together with the cytochrome P450 monooxygenase ltmJ to yield lolitremanes by multiple oxidations and ring closures. The stereoisomer pairs of lolitriol and lolitrem N or lolitrem B and lolitrem F may be attributed to variations in the way in which ring closure can occur under the action of ltmJ. While the major product of this pathway is lolitrem B, the prenyl transferases and cytochrome P450 monooxygenases identified in this pathway have a remarkable versatility in their regio- and stereo-specificities to generate a diverse range of metabolites that are products of a metabolic grid rather than a linear pathway. The chain is FAD-dependent monooxygenase ltmM (ltmM) from Epichloe festucae var. lolii (Neotyphodium lolii).